The primary structure comprises 448 residues: Phosphoglucosamine mutase (448 aa).

Ser-100 serves as the catalytic Phosphoserine intermediate. Mg(2+) contacts are provided by Ser-100, Asp-240, Asp-242, and Asp-244. Ser-100 is subject to Phosphoserine.

The protein belongs to the phosphohexose mutase family. Mg(2+) serves as cofactor. Activated by phosphorylation.

The enzyme catalyses alpha-D-glucosamine 1-phosphate = D-glucosamine 6-phosphate. In terms of biological role, catalyzes the conversion of glucosamine-6-phosphate to glucosamine-1-phosphate. The chain is Phosphoglucosamine mutase from Bacillus velezensis (strain DSM 23117 / BGSC 10A6 / LMG 26770 / FZB42) (Bacillus amyloliquefaciens subsp. plantarum).